A 515-amino-acid chain; its full sequence is uncharacterized protein (515 aa).

This sequence belongs to the AllF family.

This is an uncharacterized protein from Escherichia coli (strain K12).